Reading from the N-terminus, the 431-residue chain is Serine/threonine-protein kinase Sgk1 (431 aa).

A necessary for localization to the mitochondria region spans residues 1-60; the sequence is MTVKAEAARSTLTYSRMRGMVAILIAFMKQRRMGLNDFIQKIASNTYACKHAEVQSILKM. Positions 65–92 are disordered; that stretch reads EPELMNANPSPPPSPSQQINLGPSSNPH. At Ser74 the chain carries Phosphoserine. Ser78 carries the post-translational modification Phosphoserine; by MAPK7. The span at 81–91 shows a compositional bias: polar residues; the sequence is QQINLGPSSNP. Residues 98-355 form the Protein kinase domain; sequence FHFLKVIGKG…FMEIKSHIFF (258 aa). ATP is bound by residues 104-112 and Lys127; that span reads IGKGSFGKV. Residues 131–141 carry the Nuclear localization signal motif; it reads KKAILKKKEEK. Residue Asp222 is the Proton acceptor of the active site. Thr256 is subject to Phosphothreonine; by PDPK1. An AGC-kinase C-terminal domain is found at 356 to 431; the sequence is SLINWDDLIN…SYAPPVDSFL (76 aa). Residue Thr369 is modified to Phosphothreonine; by PKA. A phosphoserine mark is found at Ser397, Ser401, and Ser422.

The protein belongs to the protein kinase superfamily. AGC Ser/Thr protein kinase family. In terms of assembly, homodimer; disulfide-linked. Interacts with MAPK3/ERK1, MAPK1/ERK2, MAP2K1/MEK1, MAP2K2/MEK2, NEDD4, NEDD4L, MAPT/TAU, MAPK7, CREB1, SLC9A3R2/NHERF2 and KCNJ1/ROMK1. Forms a trimeric complex with FBXW7 and NOTCH1 Associates with the mammalian target of rapamycin complex 2 (mTORC2) via an interaction with MAPKAP1/SIN1. In terms of processing, regulated by phosphorylation. Activated by phosphorylation on Ser-422 by mTORC2, transforming it into a substrate for PDPK1 which phosphorylates it on Thr-256. Phosphorylation on Ser-397 and Ser-401 are also essential for its activity. Phosphorylation on Ser-78 by MAPK7 is required for growth factor-induced cell cycle progression. Post-translationally, ubiquitinated by NEDD4L; which promotes proteasomal degradation. Ubiquitinated by SYVN1 at the endoplasmic reticulum; which promotes rapid proteasomal degradation and maintains a high turnover rate in resting cells.

The protein resides in the cytoplasm. It localises to the nucleus. Its subcellular location is the endoplasmic reticulum membrane. The protein localises to the cell membrane. It is found in the mitochondrion. It carries out the reaction L-seryl-[protein] + ATP = O-phospho-L-seryl-[protein] + ADP + H(+). It catalyses the reaction L-threonyl-[protein] + ATP = O-phospho-L-threonyl-[protein] + ADP + H(+). Its activity is regulated as follows. Two specific sites, one in the kinase domain (Thr-256) and the other in the C-terminal regulatory region (Ser-422), need to be phosphorylated for its full activation. Phosphorylation at Ser-397 and Ser-401 are also essential for its activity. Activated by WNK1, WNK2, WNK3 and WNK4; which promote phosphorylation by mTORC2. Functionally, serine/threonine-protein kinase which is involved in the regulation of a wide variety of ion channels, membrane transporters, cellular enzymes, transcription factors, neuronal excitability, cell growth, proliferation, survival, migration and apoptosis. Plays an important role in cellular stress response. Contributes to regulation of renal Na(+) retention, renal K(+) elimination, salt appetite, gastric acid secretion, intestinal Na(+)/H(+) exchange and nutrient transport, insulin-dependent salt sensitivity of blood pressure, salt sensitivity of peripheral glucose uptake, cardiac repolarization and memory consolidation. Up-regulates Na(+) channels: SCNN1A/ENAC, SCN5A and ASIC1/ACCN2, K(+) channels: KCNJ1/ROMK1, KCNA1-5, KCNQ1-5 and KCNE1, epithelial Ca(2+) channels: TRPV5 and TRPV6, chloride channels: BSND, CLCN2 and CFTR, glutamate transporters: SLC1A3/EAAT1, SLC1A2 /EAAT2, SLC1A1/EAAT3, SLC1A6/EAAT4 and SLC1A7/EAAT5, amino acid transporters: SLC1A5/ASCT2, SLC38A1/SN1 and SLC6A19, creatine transporter: SLC6A8, Na(+)/dicarboxylate cotransporter: SLC13A2/NADC1, Na(+)-dependent phosphate cotransporter: SLC34A2/NAPI-2B, glutamate receptor: GRIK2/GLUR6. Up-regulates carriers: SLC9A3/NHE3, SLC12A1/NKCC2, SLC12A3/NCC, SLC5A3/SMIT, SLC2A1/GLUT1, SLC5A1/SGLT1 and SLC15A2/PEPT2. Regulates enzymes: GSK3A/B, PMM2 and Na(+)/K(+) ATPase, and transcription factors: CTNNB1 and nuclear factor NF-kappa-B. Stimulates sodium transport into epithelial cells by enhancing the stability and expression of SCNN1A/ENAC. This is achieved by phosphorylating the NEDD4L ubiquitin E3 ligase, promoting its interaction with 14-3-3 proteins, thereby preventing it from binding to SCNN1A/ENAC and targeting it for degradation. Regulates store-operated Ca(+2) entry (SOCE) by stimulating ORAI1 and STIM1. Regulates KCNJ1/ROMK1 directly via its phosphorylation or indirectly via increased interaction with SLC9A3R2/NHERF2. Phosphorylates MDM2 and activates MDM2-dependent ubiquitination of p53/TP53. Phosphorylates MAPT/TAU and mediates microtubule depolymerization and neurite formation in hippocampal neurons. Phosphorylates SLC2A4/GLUT4 and up-regulates its activity. Phosphorylates APBB1/FE65 and promotes its localization to the nucleus. Phosphorylates MAPK1/ERK2 and activates it by enhancing its interaction with MAP2K1/MEK1 and MAP2K2/MEK2. Phosphorylates FBXW7 and plays an inhibitory role in the NOTCH1 signaling. Phosphorylates FOXO1 resulting in its relocalization from the nucleus to the cytoplasm. Phosphorylates FOXO3, promoting its exit from the nucleus and interference with FOXO3-dependent transcription. Phosphorylates BRAF and MAP3K3/MEKK3 and inhibits their activity. Phosphorylates SLC9A3/NHE3 in response to dexamethasone, resulting in its activation and increased localization at the cell membrane. Phosphorylates CREB1. Necessary for vascular remodeling during angiogenesis. This chain is Serine/threonine-protein kinase Sgk1 (Sgk1), found in Mus musculus (Mouse).